Here is a 509-residue protein sequence, read N- to C-terminus: Probable aspartic-type endopeptidase CTSD (509 aa).

The N-terminal stretch at methionine 1–alanine 21 is a signal peptide. A Peptidase A1 domain is found at tyrosine 102 to alanine 408. The active site involves aspartate 120. Asparagine 174 carries an N-linked (GlcNAc...) asparagine glycan. Aspartate 302 is a catalytic residue. N-linked (GlcNAc...) asparagine glycosylation occurs at asparagine 361. Residues asparagine 451 to valine 489 form a disordered region. Polar residues predominate over residues glycine 466–threonine 480. An N-linked (GlcNAc...) asparagine glycan is attached at asparagine 484. The GPI-anchor amidated serine moiety is linked to residue serine 485. The propeptide at serine 486–serine 509 is removed in mature form.

This sequence belongs to the peptidase A1 family.

The protein resides in the cell membrane. In terms of biological role, probable GPI-anchored aspartic-type endopeptidase which contributes to virulence. This Arthroderma benhamiae (strain ATCC MYA-4681 / CBS 112371) (Trichophyton mentagrophytes) protein is Probable aspartic-type endopeptidase CTSD (CTSD).